Reading from the N-terminus, the 542-residue chain is MASSDAEALCPPVLTAGAMQAADRYTIEEYGLPSFTLMETAGRGCAARIQDAYGPLEDEAVVVLCGKGNNGGDGLVVARHLVTDGARVHVVLASAPDELSDDAAHNLSLLRQLQADGAVGERLTIGELEDVETLTAAVAPLRPRLYVDALLGTGLTSDVREPIRSLVTWVNGRTAPTVALDVPTGLHSDTGAVLGVAVRADRTATMAAPKVGLRVGEGPTRAGTVEVVDIGMPPFVLDRAAEKPGCVRETTDAAVRAWWPARDPDAYKYSVGTALIVGGAPPFAGAPVMAAKAAGRSGAGYVRCAGPETIHATLAGALTTIPTLPLPTGDDDGIAPDAALDALAEAADTADAILVGPGLGRAPGTAQFVRRLVRTVDTPLVLDADGLNALAGHIDELADQRQAPWVLTPHAGEFRRLAGEEGALTDRVRAAQTYAERWDAVCLLKGMPSVVAGPTGRTVLGSIATPALATAGTGDVLAGQCVGLMAQGLSPLNAAAAALHVGGAAAERYGATHDPRSMVATDLLDMIPRVAAERFGEGRRQR.

The tract at residues 1–243 is NAD(P)H-hydrate epimerase; it reads MASSDAEALC…PFVLDRAAEK (243 aa). The 220-residue stretch at 19–238 folds into the YjeF N-terminal domain; that stretch reads MQAADRYTIE…DIGMPPFVLD (220 aa). Positions 69 to 73 are NADPHX 1; for epimerase activity; it reads NNGGD. Asparagine 70 and aspartate 148 together coordinate K(+). The segment at 152–158 is NADPHX 1; for epimerase activity; that stretch reads GTGLTSD. A (6S)-NADPHX-binding site is contributed by aspartate 181. Position 184 (threonine 184) interacts with K(+). Residues 251-534 form the YjeF C-terminal domain; sequence TDAAVRAWWP…DMIPRVAAER (284 aa). The interval 251 to 542 is ADP-dependent (S)-NAD(P)H-hydrate dehydratase; sequence TDAAVRAWWP…ERFGEGRRQR (292 aa). Residue glycine 358 coordinates (6S)-NADPHX. Residues 410–416 form an NADPHX 2; for dehydratase activity region; the sequence is HAGEFRR. Residues 445–449 and 465–474 each bind ADP; these read KGMPS and TPALATAGTG. Aspartate 475 is a (6S)-NADPHX binding site.

This sequence in the N-terminal section; belongs to the NnrE/AIBP family. It in the C-terminal section; belongs to the NnrD/CARKD family. It depends on K(+) as a cofactor.

It catalyses the reaction (6S)-NADHX + ADP = AMP + phosphate + NADH + H(+). The enzyme catalyses (6S)-NADPHX + ADP = AMP + phosphate + NADPH + H(+). The catalysed reaction is (6R)-NADHX = (6S)-NADHX. It carries out the reaction (6R)-NADPHX = (6S)-NADPHX. In terms of biological role, bifunctional enzyme that catalyzes the epimerization of the S- and R-forms of NAD(P)HX and the dehydration of the S-form of NAD(P)HX at the expense of ADP, which is converted to AMP. This allows the repair of both epimers of NAD(P)HX, a damaged form of NAD(P)H that is a result of enzymatic or heat-dependent hydration. This is Bifunctional NAD(P)H-hydrate repair enzyme Nnr (nnr) from Salinibacter ruber (strain DSM 13855 / M31).